The following is a 988-amino-acid chain: Transcription regulator srbA precursor (988 aa).

At 1–427 the chain is on the cytoplasmic side; it reads MSTPGIGGDF…SSWHARAISH (427 aa). 2 disordered regions span residues 53–85 and 108–169; these read AFPETANASPSSPFDLAFISPSASSGREASDAM and GDLN…KKRA. The span at 125-136 shows a compositional bias: low complexity; that stretch reads SLSVHSNSPLSS. Residues 165–178 are basic motif; it reads SKKRAHNVIEKRYR. A bHLH domain is found at 165 to 236; sequence SKKRAHNVIE…SKATEYIRHL (72 aa). The segment at 179 to 236 is helix-loop-helix motif; sequence ANLNEKIAELRDSVPSLRASYKQANGNSGDDDDDGVTSASKLNKASILSKATEYIRHL. A coiled-coil region spans residues 226-260; that stretch reads LSKATEYIRHLEIRNKRLEEENTALKIRLRQLDKA. Residues 267–291 show a composition bias toward polar residues; it reads SAASVSSPSDCTVSTESGASSSPSV. A disordered region spans residues 267–313; sequence SAASVSSPSDCTVSTESGASSSPSVFSHAEDVPSDHSPTSSHPPEGL. Over residues 301-310 the composition is skewed to low complexity; that stretch reads DHSPTSSHPP. Residues 428–447 traverse the membrane as a helical segment; the sequence is FLMLAILVVGSAFIVFVYLF. Residues 448-988 lie on the Lumenal side of the membrane; the sequence is NSDPRRQYSA…SDNLLLSDES (541 aa). Low complexity predominate over residues 866–881; the sequence is PPSPMSKASDMLSSSS. Residues 866–900 form a disordered region; that stretch reads PPSPMSKASDMLSSSSDDGEDGASQRNNNIIPHPM.

Post-translationally, in low oxygen or sterol conditions, undergoes proteolytic cleavage by rhomboid-type protease rbdB and is released as soluble transcription factor from the membrane.

It is found in the endoplasmic reticulum membrane. Its subcellular location is the nucleus. Functionally, precursor of the transcription factor srbA, which is embedded in the endoplasmic reticulum membrane. Low oxygen or sterol conditions promote processing of this form, releasing the transcription factor form that translocates into the nucleus and activates transcription of genes required for adaptation to anaerobic growth. Its function is as follows. Transcription factor that regulates sterol biosynthesis and hyphal morphology. Plays a critical role in ergosterol biosynthesis, resistance to the azole class of antifungal drugs, and in maintenance of cell polarity. Directly binds erg11A/cyp51A upstream DNA sequence at tandem repeats, called TR34 and TR46, that produce duplicated binding sites. Also mediates regulation of iron acquisition in response to hypoxia and low iron conditions via activation of extra- and intracellular siderophore production. Positively regulates the expression of the other hypoxia adaptation key transcription factor srbB. Required for the azole-sensing and response to azole stress. Binds the high-affinity sites 5'-A-T-C-G/A-T/G-A/G-C/T-G/C-A-T-3' of target promoters. Required for virulence in murine models of invasive pulmonary aspergillosis (IPA). The sequence is that of Transcription regulator srbA precursor from Aspergillus fumigatus (strain ATCC MYA-4609 / CBS 101355 / FGSC A1100 / Af293) (Neosartorya fumigata).